Consider the following 332-residue polypeptide: Glycerol-3-phosphate dehydrogenase [NAD(P)+] (332 aa).

S11, F12, K32, and K106 together coordinate NADPH. Positions 106, 137, and 139 each coordinate sn-glycerol 3-phosphate. Position 141 (A141) interacts with NADPH. K192, D245, S255, R256, and N257 together coordinate sn-glycerol 3-phosphate. The active-site Proton acceptor is K192. Position 256 (R256) interacts with NADPH. Positions 280 and 282 each coordinate NADPH.

This sequence belongs to the NAD-dependent glycerol-3-phosphate dehydrogenase family.

The protein resides in the cytoplasm. It catalyses the reaction sn-glycerol 3-phosphate + NAD(+) = dihydroxyacetone phosphate + NADH + H(+). The catalysed reaction is sn-glycerol 3-phosphate + NADP(+) = dihydroxyacetone phosphate + NADPH + H(+). The protein operates within membrane lipid metabolism; glycerophospholipid metabolism. Catalyzes the reduction of the glycolytic intermediate dihydroxyacetone phosphate (DHAP) to sn-glycerol 3-phosphate (G3P), the key precursor for phospholipid synthesis. The polypeptide is Glycerol-3-phosphate dehydrogenase [NAD(P)+] (Staphylococcus haemolyticus (strain JCSC1435)).